A 190-amino-acid chain; its full sequence is MSIKSDRWIRRMSEQHGMIEPFEAGQVKQANGERIVSYGTSSYGYDVRCSREFKVFTNINSTIVDPKHFDPGSFVDIVGDECIIPPNSFALARTVEYFRIPRDTLVVCLGKSTYARCGIIVNVTPLEPEWEGHVTLEFSNTTPLPARIYANEGVAQMLFFQAAADDVCETSYRDRGGKYQGQTGVTLPRT.

Residues 111–116 (KSTYAR), 135–137 (TLE), Q156, Y172, and Q182 each bind dCTP. E137 serves as the catalytic Proton donor/acceptor.

The protein belongs to the dCTP deaminase family. As to quaternary structure, homotrimer.

It catalyses the reaction dCTP + H2O + H(+) = dUTP + NH4(+). It functions in the pathway pyrimidine metabolism; dUMP biosynthesis; dUMP from dCTP (dUTP route): step 1/2. Its function is as follows. Catalyzes the deamination of dCTP to dUTP. In Stenotrophomonas maltophilia (strain R551-3), this protein is dCTP deaminase.